Consider the following 136-residue polypeptide: Glutaredoxin-C7 (136 aa).

Residues 29-135 form the Glutaredoxin domain; the sequence is LLRIESLASE…PLLKDAGALW (107 aa). Cys49 and Cys52 form a disulfide bridge. The Responsive for interaction with TGA factors motif lies at 133–136; that stretch reads ALWL.

This sequence belongs to the glutaredoxin family. CC-type subfamily. Interacts with TGA2, TGA3, TGA7 and PAN. Interacts with TGA9 and TGA10 in the nucleus. Highly expressed in inflorescences, roots, and siliques. Expressed at lower levels in mature flowers.

The protein resides in the cytoplasm. It localises to the nucleus. Its function is as follows. Has a glutathione-disulfide oxidoreductase activity in the presence of NADPH and glutathione reductase. Reduces low molecular weight disulfides and proteins. Involved in flower development as a regulator of petal primorida initiation and further petal morphogenesis. May mediate post-translational modifications of target proteins required for normal petal organ initiation and morphogenesis. ROXY1/TGA protein interactions can occur in vivo and support their biological relevance in petal development. May be involved in the regulation of the floral regulator class C gene AG (AGAMOUS). In Arabidopsis thaliana (Mouse-ear cress), this protein is Glutaredoxin-C7 (GRXC7).